A 59-amino-acid polypeptide reads, in one-letter code: Large ribosomal subunit protein uL30 (59 aa).

The protein belongs to the universal ribosomal protein uL30 family. As to quaternary structure, part of the 50S ribosomal subunit.

The chain is Large ribosomal subunit protein uL30 from Stutzerimonas stutzeri (strain A1501) (Pseudomonas stutzeri).